We begin with the raw amino-acid sequence, 317 residues long: Melanocyte-stimulating hormone receptor (317 aa).

Topologically, residues 1–37 (MPVLGSQRRLLGSLNCTPPATFPLTLAPNRTGPQCLE) are extracellular. Residue Asn29 is glycosylated (N-linked (GlcNAc...) asparagine). The chain crosses the membrane as a helical span at residues 38–63 (VSIPDGLFLSLGLVSLVENVLVVAAI). The Cytoplasmic segment spans residues 64–72 (AKNRNLHSP). Residues 73 to 93 (MYYFICCLAVSDLLVSVSNVL) traverse the membrane as a helical segment. Residues 94–118 (ETAVMLLLEAGALAARAAVVQQLDN) are Extracellular-facing. Residues 119 to 140 (VIDMLICGSMVSSLCFLGAIAV) traverse the membrane as a helical segment. Over 141 to 163 (DRYISIFYALRYHSVVTLPRAWR) the chain is Cytoplasmic. A helical membrane pass occupies residues 164-183 (IIAAIWVASILTSLLFITYY). The Extracellular portion of the chain corresponds to 184–191 (NHTVVLLC). A helical transmembrane segment spans residues 192–211 (LVGFFIAMLALMAVLYVHML). Residues 212–240 (ARACQHARGIARLQKRQRPIHQGFGLKGA) lie on the Cytoplasmic side of the membrane. A helical membrane pass occupies residues 241 to 266 (ATLTILLGVFFLCWGPFFLHLSLIVL). The Extracellular portion of the chain corresponds to 267 to 279 (CPQHPTCGCIFKN). A helical transmembrane segment spans residues 280–300 (FNLFLALIICNAIVDPLIYAF). Residues 301–317 (RSQELRKTLQEVLQCSW) are Cytoplasmic-facing. A lipid anchor (S-palmitoyl cysteine) is attached at Cys315.

The protein belongs to the G-protein coupled receptor 1 family. As to quaternary structure, interacts with MGRN1, but does not undergo MGRN1-mediated ubiquitination; this interaction competes with GNAS-binding and thus inhibits agonist-induced cAMP production. Interacts with OPN3; the interaction results in a decrease in MC1R-mediated cAMP signaling and ultimately a decrease in melanin production in melanocytes.

It is found in the cell membrane. Its function is as follows. Receptor for MSH (alpha, beta and gamma) and ACTH. The activity of this receptor is mediated by G proteins which activate adenylate cyclase. Mediates melanogenesis, the production of eumelanin (black/brown) and phaeomelanin (red/yellow), via regulation of cAMP signaling in melanocytes. The sequence is that of Melanocyte-stimulating hormone receptor (MC1R) from Capreolus capreolus (European roe deer).